Reading from the N-terminus, the 509-residue chain is Cation transporter HKT2;4 (509 aa).

Topologically, residues 1–32 (MPIRLHIFVSSARHAINSSALICRFIAFHLSP) are cytoplasmic. The next 2 helical transmembrane spans lie at 33-53 (LLIHLSYFLIIDVLGFVALVV) and 96-116 (VLTLLMFLGSEMFLSFLGLVL). Topologically, residues 117-164 (ESSKQNKHDPENRRVSSVTVCEQSHLEEAIPQTPSMNSTDIKRSCHKY) are cytoplasmic. 2 helical membrane-spanning segments follow: residues 165 to 185 (LVFVVLAYMIIILVTGSLLVF) and 237 to 257 (GLLLLLIGQILAGSTLLPMFL). Over 258-296 (RLVIWALRGLRLAKAEEPDFMMNNSSSVGFSHLLPNLQT) the chain is Cytoplasmic. The next 2 membrane-spanning stretches (helical) occupy residues 297–317 (IFLAAVEVAFVGMTVILFCCL) and 353–373 (CSLVAPAALVLFMVMMYTPSL). Residues 374-400 (TKLFSACQDHKQIGPESDDRTSKGKPF) lie on the Cytoplasmic side of the membrane. The next 2 helical transmembrane spans lie at 401 to 421 (LKTMAFSPLAFNTTVIMLVCI) and 476 to 496 (SFSGWWSEPGKLILVLAMLYG). Residues 497-509 (RLNSKDSTSARTR) lie on the Cytoplasmic side of the membrane.

The protein belongs to the TrkH potassium transport family. HKT (TC 2.A.38.3) subfamily. Expressed in spikelets, leaf blades, leaf sheaths, internodes, nodes, the base of stems and roots.

Its subcellular location is the cell membrane. It catalyses the reaction K(+)(in) = K(+)(out). It carries out the reaction Mg(2+)(in) = Mg(2+)(out). The catalysed reaction is Ca(2+)(in) = Ca(2+)(out). Its function is as follows. High-affinity potassium transporter that does not show potassium-sodium cotransport. Potassium transport seems to be independent of sodium. Mediates transport of the divalent cations magnesium and calcium in the absence of competing potassium ions. Selectivity for potassium is dominant over divalent cations, and magnesium and calcium transport may be small and may depend on competing potassium concentrations. This Oryza sativa subsp. japonica (Rice) protein is Cation transporter HKT2;4.